We begin with the raw amino-acid sequence, 473 residues long: Probable lipid II flippase MurJ (473 aa).

13 helical membrane passes run 31–51, 90–110, 125–145, 153–173, 177–197, 215–235, 253–273, 300–320, 327–347, 360–380, 382–402, 414–434, and 439–459; these read TFGA…PFFL, LVTL…ASIF, LIRL…FYSV, FLPA…CLFG, WAAA…LPFG, FFGT…DVNV, LYQL…LSTL, IGLM…GAFT, SAQI…FNLL, PFFA…ILGF, MGAS…FVFL, IFKI…LRGS, and LGTI…SKLL.

The protein belongs to the MurJ/MviN family.

It is found in the cell inner membrane. Its pathway is cell wall biogenesis; peptidoglycan biosynthesis. In terms of biological role, involved in peptidoglycan biosynthesis. Transports lipid-linked peptidoglycan precursors from the inner to the outer leaflet of the cytoplasmic membrane. The protein is Probable lipid II flippase MurJ of Thermotoga maritima (strain ATCC 43589 / DSM 3109 / JCM 10099 / NBRC 100826 / MSB8).